A 185-amino-acid chain; its full sequence is uncharacterized protein (185 aa).

Residues 1–29 (MKNQEIIEVKSKMFLRIWAFVGSAGMGLA) form the signal peptide. The N-palmitoyl cysteine moiety is linked to residue Cys30. Cys30 is lipidated: S-diacylglycerol cysteine. The helical transmembrane segment at 45 to 67 (YLLAIPAGFLFTLFCLYLFIIFF) threads the bilayer.

The protein to B.subtilis YfjE.

Its subcellular location is the cell membrane. This is an uncharacterized protein from Bacillus subtilis (strain 168).